The chain runs to 64 residues: Alternative prion protein (64 aa).

Residues 1–22 (MEHWGEPIPGTGQSWRQPLSTS) form a disordered region. The segment covering 11–22 (TGQSWRQPLSTS) has biased composition (polar residues). A helical transmembrane segment spans residues 40 to 58 (WRWLGSAPWWWLGTATWWW).

It localises to the mitochondrion outer membrane. The protein is Alternative prion protein of Ovis aries (Sheep).